The primary structure comprises 97 residues: Meromycolate extension acyl carrier protein (97 aa).

The region spanning 3-81 (ASQQEIIAGL…DVVAYIQKLE (79 aa)) is the Carrier domain. S41 is modified (O-(pantetheine 4'-phosphoryl)serine).

This sequence belongs to the acyl carrier protein (ACP) family. In terms of processing, 4'-phosphopantetheine is transferred from CoA to a specific serine of apo-AcpM.

The protein localises to the cytoplasm. Acyl carrier protein involved in meromycolate extension. The chain is Meromycolate extension acyl carrier protein (acpM) from Mycolicibacterium aurum (Mycobacterium aurum).